A 354-amino-acid chain; its full sequence is Sphingosine-1-phosphate phosphatase 2 (354 aa).

Helical transmembrane passes span 43–63 (YLFR…FLPF), 76–96 (LVVI…ILKW), 115–135 (YGMP…LLIS), and 140–160 (YQYP…LVCL). The segment at 91-99 (KDILKWPRP) is phosphatase sequence motif I. A phosphatase sequence motif II region spans residues 118 to 121 (PSTH). His-121 functions as the Proton donor in the catalytic mechanism. A phosphatase sequence motif III region spans residues 161-172 (SRLYTGMHTVLD). His-168 (nucleophile) is an active-site residue. 5 helical membrane-spanning segments follow: residues 173-193 (ILGG…AWTL), 202-222 (PLFP…YPVS), 235-255 (IVAA…FQLV), 273-293 (TDML…ILLV), and 334-354 (TSVG…LGLL).

The protein belongs to the type 2 lipid phosphate phosphatase family. In terms of tissue distribution, highly expressed in pancreatic islets. Expressed in lung, small interstince, colon, kideny and brain.

The protein localises to the endoplasmic reticulum membrane. The catalysed reaction is sphinganine 1-phosphate + H2O = sphinganine + phosphate. The enzyme catalyses sphing-4-enine 1-phosphate + H2O = sphing-4-enine + phosphate. It carries out the reaction (4R)-hydroxysphinganine 1-phosphate + H2O = (4R)-hydroxysphinganine + phosphate. Functionally, has specific phosphohydrolase activity towards sphingoid base 1-phosphates. Has high phosphohydrolase activity against dihydrosphingosine-1-phosphate and sphingosine-1-phosphate (S1P) in vitro. Sphingosine-1-phosphate phosphatase activity is needed for efficient recycling of sphingosine into the sphingolipid synthesis pathway. May play a role in attenuating intracellular sphingosine 1-phosphate (S1P) signaling. May play a role in pro-inflammatory signaling. Plays a role in the regulation of pancreatic islet beta-cell endoplasmic reticulum stress and proliferation. The sequence is that of Sphingosine-1-phosphate phosphatase 2 from Mus musculus (Mouse).